Here is a 435-residue protein sequence, read N- to C-terminus: Astacin-like metalloendopeptidase (435 aa).

Residues 1–23 (MGIMGSLWPWILTMLSLLGLSMG) form the signal peptide. The 198-residue stretch at 85–282 (RLLSVTNNKW…TRVCRLYNCS (198 aa)) folds into the Peptidase M12A domain. 2 disulfide bridges follow: C132-C281 and C153-C172. Zn(2+) is bound at residue H182. The active site involves E183. 2 residues coordinate Zn(2+): H186 and H192. Low complexity predominate over residues 318–329 (SEESGSSAPSGS). Residues 318–356 (SEESGSSAPSGSRTGGQSIAGLGNSQQGWEHPPQSTFSV) form a disordered region. Positions 340 to 355 (GNSQQGWEHPPQSTFS) are enriched in polar residues.

As to quaternary structure, interacts (via N-terminal domain) with SPACA3; the interaction occurs during fertilization. The cofactor is Zn(2+). As to expression, ovary-specific. Expressed in secondary, antral and Graafian follicle oocytes. Expressed in the egg cells. Not detected in two-cell embryos. Not detected in naked oocytes, oocytes in primordial or unilaminar primary follicles, or in any other ovarian cells at pre-pubertal, pubertal or adult stages (at protein level). Ovary-specific.

The protein localises to the cytoplasm. Its subcellular location is the cell membrane. It is found in the cytoplasmic vesicle. The protein resides in the secretory vesicle. It localises to the cortical granule. Its activity is regulated as follows. Inhibited by wide spectrum metalloproteinase inhibitor batimastat (BB-94). Also inhibited by EDTA. Functionally, oocyte-specific oolemmal receptor involved in sperm and egg adhesion and fertilization. Plays a role in the polyspermy inhibition. Probably acts as a protease for the post-fertilization cleavage of ZP2. Cleaves the sperm-binding ZP2 at the surface of the zona pellucida after fertilization and cortical granule exocytosis, rendering the zona pellucida unable to support further sperm binding. The polypeptide is Astacin-like metalloendopeptidase (Mus musculus (Mouse)).